The following is an 88-amino-acid chain: Cell division topological specificity factor (88 aa).

It belongs to the MinE family.

In terms of biological role, prevents the cell division inhibition by proteins MinC and MinD at internal division sites while permitting inhibition at polar sites. This ensures cell division at the proper site by restricting the formation of a division septum at the midpoint of the long axis of the cell. This is Cell division topological specificity factor from Aeromonas hydrophila subsp. hydrophila (strain ATCC 7966 / DSM 30187 / BCRC 13018 / CCUG 14551 / JCM 1027 / KCTC 2358 / NCIMB 9240 / NCTC 8049).